We begin with the raw amino-acid sequence, 230 residues long: C-reactive protein (230 aa).

A signal peptide spans 1 to 19; that stretch reads MEKLLWCLLITISFSQAFG. In terms of domain architecture, Pentraxin (PTX) spans 24–223; the sequence is SKQAFVFPGV…DVFIKPQLWP (200 aa). A disulfide bond links Cys-55 and Cys-114. A Ca(2+)-binding site is contributed by Asn-78. N-linked (GlcNAc...) asparagine glycosylation is present at Asn-147. The Ca(2+) site is built by Glu-155, Gln-156, Asp-157, and Gln-167. A disulfide bond links Cys-227 and Cys-228.

It belongs to the pentraxin family. Homopentamer; disulfide-linked. Pentraxin (or pentaxin) have a discoid arrangement of 5 non-covalently bound subunits. Two of the five chains form a dimer linked by two interchain disulfide bonds located in the C-terminal heptapeptide and specific to rat CRP. Interacts with FCN1; may regulate monocyte activation by FCN1. The cofactor is Ca(2+). In terms of processing, the last two cysteines are involved either in interchain disulfide bonds or in an intrachain bond. In terms of tissue distribution, found in plasma.

It localises to the secreted. In terms of biological role, displays several functions associated with host defense: it promotes agglutination, bacterial capsular swelling, phagocytosis and complement fixation through its calcium-dependent binding to phosphorylcholine. Can interact with DNA and histones and may scavenge nuclear material released from damaged circulating cells. This chain is C-reactive protein (Crp), found in Rattus norvegicus (Rat).